A 327-amino-acid polypeptide reads, in one-letter code: Glycerol-3-phosphate dehydrogenase [NAD(P)+] (327 aa).

Positions 14, 35, and 108 each coordinate NADPH. The sn-glycerol 3-phosphate site is built by lysine 108 and glycine 136. Alanine 140 is a binding site for NADPH. Positions 191, 244, 254, 255, and 256 each coordinate sn-glycerol 3-phosphate. Lysine 191 functions as the Proton acceptor in the catalytic mechanism. Arginine 255 is an NADPH binding site. NADPH-binding residues include leucine 275 and glutamate 277.

It belongs to the NAD-dependent glycerol-3-phosphate dehydrogenase family.

The protein resides in the cytoplasm. It carries out the reaction sn-glycerol 3-phosphate + NAD(+) = dihydroxyacetone phosphate + NADH + H(+). The catalysed reaction is sn-glycerol 3-phosphate + NADP(+) = dihydroxyacetone phosphate + NADPH + H(+). Its pathway is membrane lipid metabolism; glycerophospholipid metabolism. In terms of biological role, catalyzes the reduction of the glycolytic intermediate dihydroxyacetone phosphate (DHAP) to sn-glycerol 3-phosphate (G3P), the key precursor for phospholipid synthesis. This Agrobacterium fabrum (strain C58 / ATCC 33970) (Agrobacterium tumefaciens (strain C58)) protein is Glycerol-3-phosphate dehydrogenase [NAD(P)+].